We begin with the raw amino-acid sequence, 408 residues long: Pleckstrin homology domain-containing family O member 1 (408 aa).

The disordered stretch occupies residues 1-21; it reads MKKSGSGKRGPPDGNHQSAAP. The region spanning 20–131 is the PH domain; that stretch reads APEKVGWVRK…WINALSSAIT (112 aa). Residues 132–192 are interaction with capping proteins (CPs); that stretch reads RAKNRILDEV…MLTLDLIQEE (61 aa). The interaction with ATM, CKIP, IFP35 and NMI stretch occupies residues 135–307; sequence NRILDEVTVE…PAQPGQLSRI (173 aa). Residues 217–264 are disordered; the sequence is LAGSRRRADSDRIQPSSQRASSLSRPWEKPDKGAPYTPQALKKFPSTE. Position 226 is a phosphoserine (S226). Residues 229-240 show a composition bias toward polar residues; that stretch reads IQPSSQRASSLS. Residues S270 and S341 each carry the phosphoserine modification. Residues 307–408 are negative regulator of AP-1 activity; it reads IQDLVARKLE…QHSQYRKSLM (102 aa). 2 disordered regions span residues 325–348 and 389–408; these read VQGLGDGKRKAKDPPQSPPDSESE and TPDSHLRQTSQHSQYRKSLM. The segment covering 389–401 has biased composition (polar residues); the sequence is TPDSHLRQTSQHS.

In terms of assembly, heterodimer or homodimer. Interacts with CK2 and actin capping subunits (capping protein CP-alpha and CP-beta). CKIP1 and CK2 together inhibit the activity of actin capping protein at the barbed ends of actin filaments. Interacts with ATM, IFP35, JUN, JUND, NMI and PI3K. Interacts with AKT1, AKT2 and AKT3 (each isozyme of PKB), PtdIns(3,5)P2, PtdIns(4,5)P2 and PtdIns(3,4,5)P2. In terms of processing, C-terminal fragments could be released during apoptosis via caspase-3-dependent cleavage.

It is found in the cell membrane. The protein localises to the nucleus. Its subcellular location is the cytoplasm. Functionally, plays a role in the regulation of the actin cytoskeleton through its interactions with actin capping protein (CP). May function to target CK2 to the plasma membrane thereby serving as an adapter to facilitate the phosphorylation of CP by protein kinase 2 (CK2). Appears to target ATM to the plasma membrane. Appears to also inhibit tumor cell growth by inhibiting AKT-mediated cell-survival. Also implicated in PI3K-regulated muscle differentiation, the regulation of AP-1 activity (plasma membrane bound AP-1 regulator that translocates to the nucleus) and the promotion of apoptosis induced by tumor necrosis factor TNF. When bound to PKB, it inhibits it probably by decreasing PKB level of phosphorylation. This chain is Pleckstrin homology domain-containing family O member 1 (Plekho1), found in Mus musculus (Mouse).